Reading from the N-terminus, the 349-residue chain is Probable ethanolamine kinase A (349 aa).

The protein belongs to the choline/ethanolamine kinase family.

Its subcellular location is the cytoplasm. It catalyses the reaction ethanolamine + ATP = phosphoethanolamine + ADP + H(+). The protein operates within phospholipid metabolism; phosphatidylethanolamine biosynthesis; phosphatidylethanolamine from ethanolamine: step 1/3. Functionally, highly specific for ethanolamine phosphorylation. May be a rate-controlling step in phosphatidylethanolamine biosynthesis. The polypeptide is Probable ethanolamine kinase A (etnkA) (Dictyostelium discoideum (Social amoeba)).